The sequence spans 250 residues: Pyrroloquinoline-quinone synthase (250 aa).

This sequence belongs to the PqqC family.

It carries out the reaction 6-(2-amino-2-carboxyethyl)-7,8-dioxo-1,2,3,4,7,8-hexahydroquinoline-2,4-dicarboxylate + 3 O2 = pyrroloquinoline quinone + 2 H2O2 + 2 H2O + H(+). It functions in the pathway cofactor biosynthesis; pyrroloquinoline quinone biosynthesis. Its function is as follows. Ring cyclization and eight-electron oxidation of 3a-(2-amino-2-carboxyethyl)-4,5-dioxo-4,5,6,7,8,9-hexahydroquinoline-7,9-dicarboxylic-acid to PQQ. The chain is Pyrroloquinoline-quinone synthase from Xanthomonas oryzae pv. oryzae (strain KACC10331 / KXO85).